Reading from the N-terminus, the 428-residue chain is Enolase 2 (428 aa).

Residue Gln162 participates in (2R)-2-phosphoglycerate binding. Residue Glu204 is the Proton donor of the active site. 3 residues coordinate Mg(2+): Asp241, Glu285, and Asp312. (2R)-2-phosphoglycerate is bound by residues Lys337, Arg366, Ser367, and Lys388. Lys337 acts as the Proton acceptor in catalysis.

It belongs to the enolase family. Mg(2+) serves as cofactor.

The protein localises to the cytoplasm. It localises to the secreted. It is found in the cell surface. The catalysed reaction is (2R)-2-phosphoglycerate = phosphoenolpyruvate + H2O. It participates in carbohydrate degradation; glycolysis; pyruvate from D-glyceraldehyde 3-phosphate: step 4/5. Catalyzes the reversible conversion of 2-phosphoglycerate (2-PG) into phosphoenolpyruvate (PEP). It is essential for the degradation of carbohydrates via glycolysis. The polypeptide is Enolase 2 (Lactobacillus johnsonii (strain CNCM I-12250 / La1 / NCC 533)).